The sequence spans 178 residues: Ribosome maturation factor RimM (178 aa).

A PRC barrel domain is found at 101 to 178 (ADEYYWYQLE…VMRVEWDADF (78 aa)).

It belongs to the RimM family. Binds ribosomal protein uS19.

It is found in the cytoplasm. Its function is as follows. An accessory protein needed during the final step in the assembly of 30S ribosomal subunit, possibly for assembly of the head region. Essential for efficient processing of 16S rRNA. May be needed both before and after RbfA during the maturation of 16S rRNA. It has affinity for free ribosomal 30S subunits but not for 70S ribosomes. This Pseudomonas fluorescens (strain Pf0-1) protein is Ribosome maturation factor RimM.